We begin with the raw amino-acid sequence, 372 residues long: Anhydro-N-acetylmuramic acid kinase (372 aa).

18–25 lines the ATP pocket; it reads GTSLDGID.

It belongs to the anhydro-N-acetylmuramic acid kinase family.

The catalysed reaction is 1,6-anhydro-N-acetyl-beta-muramate + ATP + H2O = N-acetyl-D-muramate 6-phosphate + ADP + H(+). It participates in amino-sugar metabolism; 1,6-anhydro-N-acetylmuramate degradation. Its pathway is cell wall biogenesis; peptidoglycan recycling. Catalyzes the specific phosphorylation of 1,6-anhydro-N-acetylmuramic acid (anhMurNAc) with the simultaneous cleavage of the 1,6-anhydro ring, generating MurNAc-6-P. Is required for the utilization of anhMurNAc either imported from the medium or derived from its own cell wall murein, and thus plays a role in cell wall recycling. This chain is Anhydro-N-acetylmuramic acid kinase, found in Thiobacillus denitrificans (strain ATCC 25259 / T1).